A 539-amino-acid polypeptide reads, in one-letter code: Chaperonin GroEL 1 (539 aa).

ATP-binding positions include 29-32 (TLGP), 86-90 (DGTTT), Gly413, 478-480 (NAA), and Asp494. The disordered stretch occupies residues 520–539 (IVDKPAEPEDDGHGHHGHAH). The span at 523 to 533 (KPAEPEDDGHG) shows a compositional bias: basic and acidic residues.

The protein belongs to the chaperonin (HSP60) family. As to quaternary structure, forms a cylinder of 14 subunits composed of two heptameric rings stacked back-to-back. Interacts with the co-chaperonin GroES.

It is found in the cytoplasm. The enzyme catalyses ATP + H2O + a folded polypeptide = ADP + phosphate + an unfolded polypeptide.. Together with its co-chaperonin GroES, plays an essential role in assisting protein folding. The GroEL-GroES system forms a nano-cage that allows encapsulation of the non-native substrate proteins and provides a physical environment optimized to promote and accelerate protein folding. The protein is Chaperonin GroEL 1 of Mycobacterium ulcerans (strain Agy99).